The chain runs to 490 residues: Cytochrome P450 2C54 (490 aa).

Phosphoserine is present on S127. K252 and K375 each carry N6-acetyllysine. C435 lines the heme pocket.

It belongs to the cytochrome P450 family. Heme is required as a cofactor. In terms of tissue distribution, expressed in liver.

It localises to the endoplasmic reticulum membrane. The protein resides in the microsome membrane. The catalysed reaction is an organic molecule + reduced [NADPH--hemoprotein reductase] + O2 = an alcohol + oxidized [NADPH--hemoprotein reductase] + H2O + H(+). Its function is as follows. Metabolizes arachidonic acid mainly to 12-hydroxyeicosatetraenoic acid (HETE). This chain is Cytochrome P450 2C54, found in Mus musculus (Mouse).